The chain runs to 154 residues: Myoglobin (154 aa).

Positions 2–148 (GLSDQEWQHV…FRNDMASKYK (147 aa)) constitute a Globin domain. His65 is a binding site for nitrite. Residue His65 coordinates O2. His94 contributes to the heme b binding site.

This sequence belongs to the globin family. As to quaternary structure, monomeric.

Its subcellular location is the cytoplasm. It localises to the sarcoplasm. It catalyses the reaction Fe(III)-heme b-[protein] + nitric oxide + H2O = Fe(II)-heme b-[protein] + nitrite + 2 H(+). The catalysed reaction is H2O2 + AH2 = A + 2 H2O. In terms of biological role, monomeric heme protein which primary function is to store oxygen and facilitate its diffusion within muscle tissues. Reversibly binds oxygen through a pentacoordinated heme iron and enables its timely and efficient release as needed during periods of heightened demand. Depending on the oxidative conditions of tissues and cells, and in addition to its ability to bind oxygen, it also has a nitrite reductase activity whereby it regulates the production of bioactive nitric oxide. Under stress conditions, like hypoxia and anoxia, it also protects cells against reactive oxygen species thanks to its pseudoperoxidase activity. The chain is Myoglobin (MB) from Uria lomvia (Thick-billed murre).